The following is a 226-amino-acid chain: Cytidylate kinase (226 aa).

Residue 11–19 (GPASAGKST) participates in ATP binding.

This sequence belongs to the cytidylate kinase family. Type 1 subfamily.

It is found in the cytoplasm. It carries out the reaction CMP + ATP = CDP + ADP. The enzyme catalyses dCMP + ATP = dCDP + ADP. The chain is Cytidylate kinase from Limosilactobacillus fermentum (strain NBRC 3956 / LMG 18251) (Lactobacillus fermentum).